Here is a 156-residue protein sequence, read N- to C-terminus: MKTIQGVVAAPQARVAIAISRFNHFINDSLLEGAIDALKRIGQVSDENITVVWVPGAYELPLTVRALASSGRYDAVVALGTVIRGGTAHFEFVAGECSSGLASVALNTDVPVAFGVLTTETIEQAIDRAGAKAGNKGAEAALTALEMINVLKAIKA.

5-amino-6-(D-ribitylamino)uracil contacts are provided by residues phenylalanine 22, 57 to 59 (AYE), and 81 to 83 (TVI). 86–87 (GT) is a binding site for (2S)-2-hydroxy-3-oxobutyl phosphate. The active-site Proton donor is histidine 89. Residue phenylalanine 114 participates in 5-amino-6-(D-ribitylamino)uracil binding. A (2S)-2-hydroxy-3-oxobutyl phosphate-binding site is contributed by arginine 128.

The protein belongs to the DMRL synthase family. In terms of assembly, forms an icosahedral capsid composed of 60 subunits, arranged as a dodecamer of pentamers.

The catalysed reaction is (2S)-2-hydroxy-3-oxobutyl phosphate + 5-amino-6-(D-ribitylamino)uracil = 6,7-dimethyl-8-(1-D-ribityl)lumazine + phosphate + 2 H2O + H(+). It functions in the pathway cofactor biosynthesis; riboflavin biosynthesis; riboflavin from 2-hydroxy-3-oxobutyl phosphate and 5-amino-6-(D-ribitylamino)uracil: step 1/2. Its function is as follows. Catalyzes the formation of 6,7-dimethyl-8-ribityllumazine by condensation of 5-amino-6-(D-ribitylamino)uracil with 3,4-dihydroxy-2-butanone 4-phosphate. This is the penultimate step in the biosynthesis of riboflavin. In Edwardsiella ictaluri (strain 93-146), this protein is 6,7-dimethyl-8-ribityllumazine synthase.